We begin with the raw amino-acid sequence, 305 residues long: Foldase protein PrsA (305 aa).

The first 19 residues, 1–19 (MKKWFIALAGLLLTVTLAG), serve as a signal peptide directing secretion. The N-palmitoyl cysteine moiety is linked to residue Cys20. The S-diacylglycerol cysteine moiety is linked to residue Cys20. In terms of domain architecture, PpiC spans 136–235 (EPEVSVAHIL…YGYHVILMLK (100 aa)).

Belongs to the PrsA family.

Its subcellular location is the cell membrane. The enzyme catalyses [protein]-peptidylproline (omega=180) = [protein]-peptidylproline (omega=0). Its function is as follows. Plays a major role in protein secretion by helping the post-translocational extracellular folding of several secreted proteins. In Levilactobacillus brevis (strain ATCC 367 / BCRC 12310 / CIP 105137 / JCM 1170 / LMG 11437 / NCIMB 947 / NCTC 947) (Lactobacillus brevis), this protein is Foldase protein PrsA.